The chain runs to 305 residues: Porphobilinogen deaminase (305 aa).

Cys240 carries the post-translational modification S-(dipyrrolylmethanemethyl)cysteine.

Belongs to the HMBS family. As to quaternary structure, monomer. The cofactor is dipyrromethane.

It carries out the reaction 4 porphobilinogen + H2O = hydroxymethylbilane + 4 NH4(+). It participates in porphyrin-containing compound metabolism; protoporphyrin-IX biosynthesis; coproporphyrinogen-III from 5-aminolevulinate: step 2/4. In terms of biological role, tetrapolymerization of the monopyrrole PBG into the hydroxymethylbilane pre-uroporphyrinogen in several discrete steps. This chain is Porphobilinogen deaminase, found in Xylella fastidiosa (strain M23).